A 125-amino-acid polypeptide reads, in one-letter code: Small ribosomal subunit protein uS12 (125 aa).

The tract at residues 1-31 (MPTINQLVRHGRQTEVTKSKSPAMQGGPQRR) is disordered. Position 89 is a 3-methylthioaspartic acid (D89). The interval 105 to 125 (QGVKDRKQSRSKYGAKRPKKA) is disordered. Residues 113 to 125 (SRSKYGAKRPKKA) show a composition bias toward basic residues.

The protein belongs to the universal ribosomal protein uS12 family. In terms of assembly, part of the 30S ribosomal subunit. Contacts proteins S8 and S17. May interact with IF1 in the 30S initiation complex.

With S4 and S5 plays an important role in translational accuracy. In terms of biological role, interacts with and stabilizes bases of the 16S rRNA that are involved in tRNA selection in the A site and with the mRNA backbone. Located at the interface of the 30S and 50S subunits, it traverses the body of the 30S subunit contacting proteins on the other side and probably holding the rRNA structure together. The combined cluster of proteins S8, S12 and S17 appears to hold together the shoulder and platform of the 30S subunit. This chain is Small ribosomal subunit protein uS12, found in Methylibium petroleiphilum (strain ATCC BAA-1232 / LMG 22953 / PM1).